Consider the following 281-residue polypeptide: Urease accessory protein UreD 2 (281 aa).

This sequence belongs to the UreD family. UreD, UreF and UreG form a complex that acts as a GTP-hydrolysis-dependent molecular chaperone, activating the urease apoprotein by helping to assemble the nickel containing metallocenter of UreC. The UreE protein probably delivers the nickel.

The protein localises to the cytoplasm. Functionally, required for maturation of urease via the functional incorporation of the urease nickel metallocenter. The polypeptide is Urease accessory protein UreD 2 (Pseudomonas syringae pv. tomato (strain ATCC BAA-871 / DC3000)).